The sequence spans 722 residues: Probable cation-transporting ATPase HI_0290 (722 aa).

One can recognise an HMA domain in the interval 9–75 (KKISIQIGGM…IIHKTGFSAH (67 aa)). Cys-20 and Cys-23 together coordinate a metal cation. The next 6 membrane-spanning stretches (helical) occupy residues 94–114 (LIVL…MIGG), 118–138 (LMLP…WLAI), 157–177 (VLVS…LFYH), 180–200 (HAMG…VSLG), 340–360 (VFVP…YILT), and 373–393 (VLVI…IMVG). Asp-422 functions as the 4-aspartylphosphate intermediate in the catalytic mechanism. 4 helical membrane-spanning segments follow: residues 523–543 (IWQI…GAFA), 608–628 (LGHI…LASA), 675–695 (LFFA…GFLS), and 697–717 (IIAG…ALRL). The Mg(2+) site is built by Asp-617 and Asp-621.

This sequence belongs to the cation transport ATPase (P-type) (TC 3.A.3) family. Type IB subfamily.

Its subcellular location is the cell membrane. It catalyses the reaction ATP + H2O = ADP + phosphate + H(+). This Haemophilus influenzae (strain ATCC 51907 / DSM 11121 / KW20 / Rd) protein is Probable cation-transporting ATPase HI_0290.